The sequence spans 292 residues: Aquaporin-3 (292 aa).

At 1-24 the chain is on the cytoplasmic side; that stretch reads MGRQKELVNRCGEMLHIRYRLLRQ. A helical transmembrane segment spans residues 25–42; it reads ALAECLGTLILVMFGCGS. The Extracellular portion of the chain corresponds to 43-56; it reads VAQVVLSRGTHGGF. A helical membrane pass occupies residues 57–74; sequence LTINLAFGFAVTLGILIA. Topologically, residues 75 to 78 are cytoplasmic; it reads GQVS. The discontinuously helical intramembrane region spans 79–92; sequence GAHLNPAVTFAMCF. An NPA 1 motif is present at residues 83 to 85; it reads NPA. The Cytoplasmic segment spans residues 93-100; sequence LAREPWIK. The helical transmembrane segment at 101–121 threads the bilayer; the sequence is LPVYTLAQTLGAFLGAGIIFG. At 122–159 the chain is on the extracellular side; sequence LYYDAIWAFANNQLIVSGPNGTAGIFATYPSGHLDMVN. N-linked (GlcNAc...) asparagine glycosylation is present at N141. A helical transmembrane segment spans residues 160-177; that stretch reads GFFDQFIGTASLIVCVLA. At 178 to 189 the chain is on the cytoplasmic side; sequence IVDPYNNPVPRG. The helical transmembrane segment at 190 to 206 threads the bilayer; it reads LEAFTVGLVVLVIGTSM. The Extracellular portion of the chain corresponds to 207–210; that stretch reads GFNS. An intramembrane region (discontinuously helical) is located at residues 211-224; the sequence is GYAVNPARDFGPRL. Positions 215–217 match the NPA 2 motif; sequence NPA. Residues 225–242 lie on the Extracellular side of the membrane; sequence FTAIAGWGSEVFTTGRHW. Residues 243–264 form a helical membrane-spanning segment; it reads WWVPIVSPLLGSIAGVFVYQLM. Over 265–292 the chain is Cytoplasmic; it reads IGCHLEPPPPSTDEENVKLSHVKHKEQM.

Belongs to the MIP/aquaporin (TC 1.A.8) family. Homotetramer; each monomer provides an independent glycerol/water pore. Could also exist in other oligomeric states.

Its subcellular location is the cell membrane. It localises to the basolateral cell membrane. It carries out the reaction glycerol(in) = glycerol(out). It catalyses the reaction H2O(in) = H2O(out). The enzyme catalyses urea(in) = urea(out). The catalysed reaction is H2O2(out) = H2O2(in). Its function is as follows. Aquaglyceroporins form homotetrameric transmembrane channels, with each monomer independently mediating glycerol and water transport across the plasma membrane along their osmotic gradient. Could also be permeable to urea. Also participates in cell permeability to H2O2 and H2O2-mediated signaling. In skin, transports glycerol to the epidermis and stratum corneum, where it maintains hydration, elasticity, and supports lipid biosynthesis for barrier repair. In kidney, contributes to the reabsorption of water, helping the body maintain proper fluid balance. This is Aquaporin-3 from Bos taurus (Bovine).